Here is a 101-residue protein sequence, read N- to C-terminus: Small ribosomal subunit protein uS14 (101 aa).

It belongs to the universal ribosomal protein uS14 family. Part of the 30S ribosomal subunit. Contacts proteins S3 and S10.

Functionally, binds 16S rRNA, required for the assembly of 30S particles and may also be responsible for determining the conformation of the 16S rRNA at the A site. In Beijerinckia indica subsp. indica (strain ATCC 9039 / DSM 1715 / NCIMB 8712), this protein is Small ribosomal subunit protein uS14.